The sequence spans 400 residues: Carnosine N-methyltransferase (400 aa).

The interval 1 to 49 (MQRRRRAPPASQPAQDSGHSEEVEVQFSAGRLGSAAPAGPPVRGTAEDE) is disordered. S-adenosyl-L-methionine-binding residues include Q155, R158, G199, E220, D286, F287, and C303. A carnosine-binding site is contributed by D307. Y315 is a binding site for S-adenosyl-L-methionine. Residues H338 and Y389 each coordinate carnosine.

Belongs to the carnosine N-methyltransferase family. Homodimer. Each monomer accommodates one molecule of carnosine in its active pocket, precisely anchoring the histidine imidazole ring such that only N1 is exposed and deprotonated for methylation. In terms of tissue distribution, expressed at higher level in skeletal muscle compared to other tissues.

It localises to the cytoplasm. The protein localises to the cytosol. It is found in the nucleus. It carries out the reaction carnosine + S-adenosyl-L-methionine = anserine + S-adenosyl-L-homocysteine + H(+). Its function is as follows. N-methyltransferase that catalyzes the formation of anserine (beta-alanyl-N(Pi)-methyl-L-histidine) from carnosine. Anserine, a methylated derivative of carnosine (beta-alanyl-L-histidine), is an abundant constituent of vertebrate skeletal muscles. Also methylates other L-histidine-containing di- and tripeptides such as Gly-Gly-His, Gly-His and homocarnosine (GABA-His). The polypeptide is Carnosine N-methyltransferase (Rattus norvegicus (Rat)).